A 231-amino-acid chain; its full sequence is Cytidylate kinase (231 aa).

ATP is bound at residue 16–24 (GPAASGKST). The tract at residues 176-205 (PDLDSLEQEITKRDRDDAEREHAPLKKHPE) is disordered. The segment covering 184-205 (EITKRDRDDAEREHAPLKKHPE) has biased composition (basic and acidic residues).

It belongs to the cytidylate kinase family. Type 1 subfamily.

The protein resides in the cytoplasm. The enzyme catalyses CMP + ATP = CDP + ADP. The catalysed reaction is dCMP + ATP = dCDP + ADP. This chain is Cytidylate kinase, found in Pelodictyon phaeoclathratiforme (strain DSM 5477 / BU-1).